Reading from the N-terminus, the 158-residue chain is SKP1-like protein 18 (158 aa).

The segment at 99-157 (ILAANYLNFEGLLGFASQTVADYIKDKTPEEVREIFNIENDFTPEEEEEIRKENAWTFN) is interaction with the F-box domain of F-box proteins.

Belongs to the SKP1 family. Part of a SCF (SKP1-cullin-F-box) protein ligase complex. Interacts with CPR1/CPR30, EBF1, SKP2A, At3g61590, At4g38940 and At5g49610. As to expression, expressed in young seedlings, roots, leaves, floral stems, inflorescences, pollen, and siliques.

Its subcellular location is the nucleus. It participates in protein modification; protein ubiquitination. Involved in ubiquitination and subsequent proteasomal degradation of target proteins. Together with CUL1, RBX1 and a F-box protein, it forms a SCF E3 ubiquitin ligase complex. The functional specificity of this complex depends on the type of F-box protein. In the SCF complex, it serves as an adapter that links the F-box protein to CUL1. This is SKP1-like protein 18 (ASK18) from Arabidopsis thaliana (Mouse-ear cress).